Here is a 28-residue protein sequence, read N- to C-terminus: Potassium channel toxin alpha-KTx 9.5 (28 aa).

Disulfide bonds link Cys3/Cys19, Cys6/Cys24, and Cys10/Cys26. A Valine amide modification is found at Val28.

Expressed by the venom gland.

The protein localises to the secreted. Its function is as follows. Blocks voltage-gated potassium channels Kv1.1/KCNA1 (IC(50)=145 nM), Kv1.2/KCNA2 (IC(50)=2.5 nM), and Kv1.3/KCNA3 (IC(50)=15). Also inhibits calcium-activated potassium channels (KCa/KCNN). The chain is Potassium channel toxin alpha-KTx 9.5 from Buthus occitanus tunetanus (Common European scorpion).